A 303-amino-acid chain; its full sequence is Coenzyme PQQ synthesis protein B (303 aa).

It belongs to the PqqB family.

It functions in the pathway cofactor biosynthesis; pyrroloquinoline quinone biosynthesis. Its function is as follows. May be involved in the transport of PQQ or its precursor to the periplasm. This chain is Coenzyme PQQ synthesis protein B, found in Acinetobacter baumannii (strain AB0057).